We begin with the raw amino-acid sequence, 126 residues long: Large ribosomal subunit protein bL17 (126 aa).

It belongs to the bacterial ribosomal protein bL17 family. Part of the 50S ribosomal subunit. Contacts protein L32.

The chain is Large ribosomal subunit protein bL17 from Xylella fastidiosa (strain M12).